The sequence spans 417 residues: 26S proteasome regulatory subunit RPN14 (417 aa).

WD repeat units follow at residues 134–173 (AHVS…NPRT), 176–215 (GHRA…TIHT), 242–281 (ISTS…QTIQ), 285–325 (KFTC…CPVG), 330–371 (NEGT…PAIE), and 380–416 (SNDD…NLSN).

This sequence belongs to the WD repeat PAAF1/RPN14 family. Associates with the 19S proteasome regulatory particle (RP). Interacts directly with RPT5 and RPT6.

The protein localises to the cytoplasm. The protein resides in the nucleus. In terms of biological role, acts as a regulatory subunit of the 26 proteasome which is involved in the ATP-dependent degradation of ubiquitinated proteins. Is not a genuine component of the 26S proteasome, but an auxiliary factor that interacts with the proteasomal ATPase of 19S regulatory particle (RP). Acts as a chaperone which regulates the highly structured assembly of the 19S regulatory particle. Involved in the substrate specificity of the 26S proteasome and is especially involved in the degradation of ubiquitinated GCN4. May contribute to the stability of the 26S proteasome in some stress conditions. The chain is 26S proteasome regulatory subunit RPN14 (RPN14) from Saccharomyces cerevisiae (strain ATCC 204508 / S288c) (Baker's yeast).